The following is a 61-amino-acid chain: MAQKQIKVTLVRSVIGTKQSHRDTVRGLGLRGLNSSRVLIDTPEVRGMLRKVDYLVTVSEA.

This sequence belongs to the universal ribosomal protein uL30 family. As to quaternary structure, part of the 50S ribosomal subunit.

The protein is Large ribosomal subunit protein uL30 of Bordetella avium (strain 197N).